A 141-amino-acid polypeptide reads, in one-letter code: Lutropin subunit beta (141 aa).

A signal peptide spans 1–18 (MGTLQGLLLWLLLGTGGA). 6 disulfides stabilise this stretch: C29–C77, C43–C92, C46–C130, C54–C108, C58–C110, and C113–C120. N-linked (GlcNAc...) asparagine glycosylation is present at N33.

It belongs to the glycoprotein hormones subunit beta family. As to quaternary structure, heterodimer of a common alpha chain and a unique beta chain which confers biological specificity to thyrotropin, lutropin, follitropin and gonadotropin.

It is found in the secreted. Functionally, promotes spermatogenesis and ovulation by stimulating the testes and ovaries to synthesize steroids. This is Lutropin subunit beta (LHB) from Oryctolagus cuniculus (Rabbit).